The sequence spans 461 residues: Fumarate hydratase class II (461 aa).

Substrate contacts are provided by residues 97 to 99 (SGT), 127 to 130 (HPND), 137 to 139 (SSN), and Thr185. Catalysis depends on His186, which acts as the Proton donor/acceptor. Ser316 is a catalytic residue. Residues Ser317 and 322–324 (KVN) each bind substrate.

Belongs to the class-II fumarase/aspartase family. Fumarase subfamily. In terms of assembly, homotetramer.

The protein resides in the cytoplasm. The enzyme catalyses (S)-malate = fumarate + H2O. The protein operates within carbohydrate metabolism; tricarboxylic acid cycle; (S)-malate from fumarate: step 1/1. In terms of biological role, involved in the TCA cycle. Catalyzes the stereospecific interconversion of fumarate to L-malate. The polypeptide is Fumarate hydratase class II (Staphylococcus aureus (strain Mu50 / ATCC 700699)).